A 491-amino-acid polypeptide reads, in one-letter code: Putative F-box/LRR-repeat protein At3g59230 (491 aa).

The 47-residue stretch at 11 to 57 (KDIINSLPEALIYHILSFLSTKEAAITSLLSRKWRYFFAFVPNLDFD) folds into the F-box domain. 7 LRR repeats span residues 127-154 (LSIA…RIEA), 156-182 (NGLA…YLDS), 184-209 (ELDY…VMID), 325-351 (ASTV…TIES), 352-377 (NTKV…VFQG), 419-444 (NDKT…NIYY), and 472-491 (VQVI…SSSI).

The chain is Putative F-box/LRR-repeat protein At3g59230 from Arabidopsis thaliana (Mouse-ear cress).